The following is a 453-amino-acid chain: MAPQTQSLVFKVRRNPQELVTPAKPTPKEFKLLSDIDDQTSLRSLTPLVTIYRNNPSMEGKDPVEIIREALSKTLVFYYPFAGRLRNGPNGKLMVDCTGEGVIFIEADADVTLDQFGIDLHPPFPCFDQLLYDVPGSDGILDSPLLLIQVTRLKCGGFIFAVRLNHAMCDAIGMSQFMKGLAEIARGEPKPFILPVWHRELLCARNPPKVTFIHNEYQKPPHDNNNNNFILQHSSFFFGPNELDAIRRLLPYHHSKSTTSDILTAFLWRCRTLALQPENPNHEFRLLYILNARYGRCSFNPPLPEGFYGNAFVSPAAISTGEKLCNNPLEYALELMKEAKSKGTEEYVHSVADLMVIKGRPSYFYNDVGYLEVSDLTKARFRDVDFGWGKAVYGGATQGYFSSILYVSYTNSKGVEGIMALTSLPTKAMERFEKELDDLFKTKDKSQILRSHI.

Active-site proton acceptor residues include His-166 and Asp-385.

The protein belongs to the plant acyltransferase family. Monomer. As to expression, expressed in roots and hypocotyls. Detected in seeds, leaves and cotyledons, but not in young developing leaves.

It carries out the reaction 13-hydroxylupanine + (2E)-2-methylbut-2-enoyl-CoA = 13-(2-methylcrotonoyloxy)lupanine + CoA. Its activity is regulated as follows. Inhibited by N-ethylmaleimide, p-chloromercuribenzoic acid and diethylpyrocarbonate (DEPC). Acyl-CoA-dependent acyltransferase involved in the synthesis of lupanine alkaloids. Can use both (-)-13alpha-hydroxymultiflorine and (+)-13alpha-hydroxylupanine as substrates. Lower activity with (-)-3beta, 13alpha-dihydroxylupanine, but no activity with (+)-epilupinine and (-)-lupinine as substrates. Tigloyl-CoA, benzoyl-CoA and, more slowly, acetyl-CoA, propionyl-CoA and 2-butenoyl-CoA can act as acyl donors. This Lupinus albus (White lupine) protein is 13-hydroxylupanine O-tigloyltransferase (HMT/HLT).